The following is a 632-amino-acid chain: Threonine--tRNA ligase (632 aa).

Positions 1–59 (MIRITFLAKQKVEEYSSRVTGFDILQPDISKEAIALRVNGELYDLSREIESDTEIDVIQ) constitute a TGS domain. The tract at residues 240–532 (DHRRIAKDMD…LIEHYAGKFP (293 aa)) is catalytic. Zn(2+) contacts are provided by cysteine 332, histidine 383, and histidine 509.

This sequence belongs to the class-II aminoacyl-tRNA synthetase family. Homodimer. It depends on Zn(2+) as a cofactor.

It is found in the cytoplasm. The catalysed reaction is tRNA(Thr) + L-threonine + ATP = L-threonyl-tRNA(Thr) + AMP + diphosphate + H(+). Catalyzes the attachment of threonine to tRNA(Thr) in a two-step reaction: L-threonine is first activated by ATP to form Thr-AMP and then transferred to the acceptor end of tRNA(Thr). Also edits incorrectly charged L-seryl-tRNA(Thr). This Wolbachia sp. subsp. Brugia malayi (strain TRS) protein is Threonine--tRNA ligase.